The chain runs to 175 residues: Nucleoside triphosphate/diphosphate phosphatase (175 aa).

The Proton donor role is filled by Arg23. 6 residues coordinate Mg(2+): Asn87, Asp103, Asp105, Asp107, Asp120, and Glu123.

The protein belongs to the Ntdp family. Mg(2+) serves as cofactor.

The catalysed reaction is a ribonucleoside 5'-triphosphate + H2O = a ribonucleoside 5'-diphosphate + phosphate + H(+). The enzyme catalyses a ribonucleoside 5'-diphosphate + H2O = a ribonucleoside 5'-phosphate + phosphate + H(+). In terms of biological role, has nucleoside phosphatase activity towards nucleoside triphosphates and nucleoside diphosphates. The chain is Nucleoside triphosphate/diphosphate phosphatase from Oceanobacillus iheyensis (strain DSM 14371 / CIP 107618 / JCM 11309 / KCTC 3954 / HTE831).